The following is a 508-amino-acid chain: Phenylalanine--tRNA ligase alpha subunit (508 aa).

A2 is subject to N-acetylalanine. T190 is modified (phosphothreonine). Residues S193 and S301 each carry the phosphoserine modification. K311 carries the N6-acetyllysine modification. Residues T329, 372–374, and Y412 each bind L-phenylalanine; that span reads QIE. E414 serves as a coordination point for Mg(2+). Residue F438 participates in L-phenylalanine binding.

This sequence belongs to the class-II aminoacyl-tRNA synthetase family. Phe-tRNA synthetase alpha subunit type 2 subfamily. In terms of assembly, heterotetramer; dimer of two heterodimers formed by FARSA and FARSB. Mg(2+) serves as cofactor.

The protein resides in the cytoplasm. It catalyses the reaction tRNA(Phe) + L-phenylalanine + ATP = L-phenylalanyl-tRNA(Phe) + AMP + diphosphate + H(+). This is Phenylalanine--tRNA ligase alpha subunit (FARSA) from Pongo abelii (Sumatran orangutan).